The following is a 1183-amino-acid chain: Rab11 family-interacting protein 3 (1183 aa).

The segment at 423–448 (AEDPSTESLPRKNGQEESKSALPVST) is disordered. Residues 431-441 (LPRKNGQEESK) are compositionally biased toward basic and acidic residues. EF-hand domains follow at residues 706-741 (EEQS…YGAE) and 738-773 (YGAE…ISNE). Ca(2+)-binding residues include D719, D721, D723, E730, D751, S753, and D762. Residues 902-1121 (ELEKDSLESE…NGQIINLSIQ (220 aa)) adopt a coiled-coil conformation. An ARF-binding domain (ABD) region spans residues 911–1015 (EEQHARLRQE…LQDEADDITQ (105 aa)). The disordered stretch occupies residues 1005–1044 (KLQDEADDITQRLNEESESRRKMSDKLSHERHTNQKEKEC). An FIP-RBD domain is found at 1121 to 1183 (QGAKSLFTES…ESNPSILEVK (63 aa)).

The protein resides in the recycling endosome membrane. Its subcellular location is the cytoplasm. The protein localises to the cytoskeleton. It localises to the microtubule organizing center. It is found in the centrosome. The protein resides in the cleavage furrow. Its subcellular location is the midbody. The protein localises to the golgi apparatus membrane. It localises to the golgi apparatus. It is found in the trans-Golgi network membrane. In terms of biological role, downstream effector molecule for Rab11 GTPase which acts as a regulator of endocytic trafficking, cytokinesis and intracellular ciliogenesis by participating in membrane delivery. This Danio rerio (Zebrafish) protein is Rab11 family-interacting protein 3 (rab11fip3).